A 218-amino-acid chain; its full sequence is Cytochrome b6 (218 aa).

A helical transmembrane segment spans residues 35–55; the sequence is IFYCLGGITLVCFLIQFATGF. Cysteine 38 serves as a coordination point for heme c. 2 residues coordinate heme b: histidine 89 and histidine 103. Helical transmembrane passes span 93 to 113, 119 to 139, and 189 to 209; these read ASMM…TGGF, LTWV…VTGY, and LHTF…FLMI. 2 residues coordinate heme b: histidine 190 and histidine 205.

The protein belongs to the cytochrome b family. PetB subfamily. The 4 large subunits of the cytochrome b6-f complex are cytochrome b6, subunit IV (17 kDa polypeptide, PetD), cytochrome f and the Rieske protein, while the 4 small subunits are PetG, PetL, PetM and PetN. The complex functions as a dimer. Heme b is required as a cofactor. Requires heme c as cofactor.

The protein resides in the cellular thylakoid membrane. Functionally, component of the cytochrome b6-f complex, which mediates electron transfer between photosystem II (PSII) and photosystem I (PSI), cyclic electron flow around PSI, and state transitions. The polypeptide is Cytochrome b6 (Synechococcus sp. (strain CC9902)).